The following is a 417-amino-acid chain: Probable sugar-binding periplasmic protein (417 aa).

The N-terminal stretch at Met-1 to Ala-21 is a signal peptide.

It belongs to the bacterial solute-binding protein 1 family.

Its subcellular location is the periplasm. Part of a binding-protein-dependent transport system for a sugar. This Mesorhizobium japonicum (strain LMG 29417 / CECT 9101 / MAFF 303099) (Mesorhizobium loti (strain MAFF 303099)) protein is Probable sugar-binding periplasmic protein.